We begin with the raw amino-acid sequence, 325 residues long: Holliday junction branch migration complex subunit RuvB (325 aa).

Residues 1 to 180 (MKNQLLDAKV…FGIHLKLNFY (180 aa)) are large ATPase domain (RuvB-L). ATP is bound by residues Leu-19, Arg-20, Gly-61, Lys-64, Thr-65, Thr-66, 127–129 (EDF), Arg-170, Tyr-180, and Arg-217. Thr-65 is a Mg(2+) binding site. A small ATPAse domain (RuvB-S) region spans residues 181-251 (SCEELTKIVE…ITDYALNQLG (71 aa)). Positions 254–325 (KLGLDSSDHK…ITANALKHLH (72 aa)) are head domain (RuvB-H). Positions 290, 309, and 314 each coordinate DNA.

It belongs to the RuvB family. Homohexamer. Forms an RuvA(8)-RuvB(12)-Holliday junction (HJ) complex. HJ DNA is sandwiched between 2 RuvA tetramers; dsDNA enters through RuvA and exits via RuvB. An RuvB hexamer assembles on each DNA strand where it exits the tetramer. Each RuvB hexamer is contacted by two RuvA subunits (via domain III) on 2 adjacent RuvB subunits; this complex drives branch migration. In the full resolvosome a probable DNA-RuvA(4)-RuvB(12)-RuvC(2) complex forms which resolves the HJ.

It is found in the cytoplasm. It carries out the reaction ATP + H2O = ADP + phosphate + H(+). The RuvA-RuvB-RuvC complex processes Holliday junction (HJ) DNA during genetic recombination and DNA repair, while the RuvA-RuvB complex plays an important role in the rescue of blocked DNA replication forks via replication fork reversal (RFR). RuvA specifically binds to HJ cruciform DNA, conferring on it an open structure. The RuvB hexamer acts as an ATP-dependent pump, pulling dsDNA into and through the RuvAB complex. RuvB forms 2 homohexamers on either side of HJ DNA bound by 1 or 2 RuvA tetramers; 4 subunits per hexamer contact DNA at a time. Coordinated motions by a converter formed by DNA-disengaged RuvB subunits stimulates ATP hydrolysis and nucleotide exchange. Immobilization of the converter enables RuvB to convert the ATP-contained energy into a lever motion, pulling 2 nucleotides of DNA out of the RuvA tetramer per ATP hydrolyzed, thus driving DNA branch migration. The RuvB motors rotate together with the DNA substrate, which together with the progressing nucleotide cycle form the mechanistic basis for DNA recombination by continuous HJ branch migration. Branch migration allows RuvC to scan DNA until it finds its consensus sequence, where it cleaves and resolves cruciform DNA. The chain is Holliday junction branch migration complex subunit RuvB from Orientia tsutsugamushi (strain Ikeda) (Rickettsia tsutsugamushi).